The primary structure comprises 131 residues: MVVLYTTASCASCRKAKAWLEENQIDYTEKNIVSNSMTVDELKSILRLTEEGATEIISTRSKTFQDLNINIEELSLNEFYKLIIEHPLMLRRPIMLDEKRLQIGFNDEEIRKFLPRSVRTFLNIELQKLAN.

Residues C10 and C13 are joined by a disulfide bond.

This sequence belongs to the ArsC family. Spx subfamily. Interacts with the C-terminal domain of the alpha subunit of the RNAP.

Its subcellular location is the cytoplasm. Functionally, global transcriptional regulator that plays a key role in stress response and exerts either positive or negative regulation of genes. Acts by interacting with the C-terminal domain of the alpha subunit of the RNA polymerase (RNAP). This interaction can enhance binding of RNAP to the promoter region of target genes and stimulate their transcription, or block interaction of RNAP with activator. In Bacillus anthracis, this protein is Global transcriptional regulator Spx 2.